A 136-amino-acid chain; its full sequence is VSQADIAAVQTSWRRCYCSWDNEDGLKFYQTLFDSNSKIRHAFESAGATNDTEMEKQANLFGLMMTQFIDNLDDTTALNYKISGLMATHKTRNVVDPALFAIALNELVKFIGNQQPAWKNVTAVILSQMKIALSSN.

The region spanning 1 to 134 (VSQADIAAVQ…ILSQMKIALS (134 aa)) is the Globin domain. Heme b is bound at residue His-89.

The protein belongs to the globin family. As to quaternary structure, homodimer.

The polypeptide is Globin-2 (Phreagena soyoae (Deep-sea cold-seep clam)).